The following is a 125-amino-acid chain: MAFDKDAFLTALDSMSVMELNELVKAIEEKFGVSAAAMAAPAAGGGGGAAAAVEEKTEFNVVLLEAGANKVSVIKAVRELTGLGLKEAKDLVDGAPKNVKEAVAKADAEAAVKKLVEAGAKAELK.

This sequence belongs to the bacterial ribosomal protein bL12 family. As to quaternary structure, homodimer. Part of the ribosomal stalk of the 50S ribosomal subunit. Forms a multimeric L10(L12)X complex, where L10 forms an elongated spine to which 2 to 4 L12 dimers bind in a sequential fashion. Binds GTP-bound translation factors.

Forms part of the ribosomal stalk which helps the ribosome interact with GTP-bound translation factors. Is thus essential for accurate translation. The polypeptide is Large ribosomal subunit protein bL12 (Methylibium petroleiphilum (strain ATCC BAA-1232 / LMG 22953 / PM1)).